An 872-amino-acid polypeptide reads, in one-letter code: Oxidation resistance protein 1 (872 aa).

Residues 1–86 (MSVTNLSWLK…QKKTLDKKDG (86 aa)) form a disordered region. Residues 63 to 86 (RRSELKRFYTIDTGQKKTLDKKDG) show a composition bias toward basic and acidic residues. Serine 90 carries the post-translational modification Phosphoserine. Residues 98 to 141 (VKYTVESRDSLNSIALKFDTTPNELVQLNKLFSRAVVTGQVLYV) form the LysM domain. Threonine 118 is modified (phosphothreonine). Residues 150 to 168 (VESSPSLSPISPLSPTSSE) show a composition bias toward low complexity. Residues 150 to 187 (VESSPSLSPISPLSPTSSEAELEKTTTPDVVHPKEPTP) form a disordered region. The span at 170–184 (ELEKTTTPDVVHPKE) shows a compositional bias: basic and acidic residues. A phosphoserine mark is found at serine 201, serine 202, and serine 204. The 57-residue stretch at 212–268 (EKFLKINCRYITSSKGTVSGVLLVTPNNIMFDPHKTDPLVQENGCEEYGIMCPMEEV) folds into the GRAM domain. Residues serine 294, serine 334, and serine 336 each carry the phosphoserine modification. The disordered stretch occupies residues 314-338 (SRIRDAANDSASTAPRSTEESLSED). Residue threonine 341 is modified to Phosphothreonine. 2 positions are modified to phosphoserine: serine 346 and serine 496. Residues 549–576 (RRHRLHKFLCLRVRKPMRKTFVSQASAT) are mediates oxidative antimutator activity. The region spanning 711 to 872 (HLLLPDQIIK…IQDIEIWAFK (162 aa)) is the TLDc domain.

Belongs to the OXR1 family.

It is found in the mitochondrion. May be involved in protection from oxidative damage. This is Oxidation resistance protein 1 (OXR1) from Bos taurus (Bovine).